A 107-amino-acid polypeptide reads, in one-letter code: Precursor of CEP14 (107 aa).

The signal sequence occupies residues 1–21 (MAVRLIPTIWLFIVFAVIVSA). A propeptide spanning residues 22 to 92 (LPSLVSSRKL…GKLRSRHLST (71 aa)) is cleaved from the precursor. An N-linked (GlcNAc...) asparagine glycan is attached at Asn-39. Positions 43–76 (REEEKSHMPHVTKTSTLSALPKGKIPNSTPSKKG) are disordered. Pro-101 and Pro-103 each carry hydroxyproline.

This sequence belongs to the C-terminally encoded plant signaling peptide (CEP) family. As to quaternary structure, interacts with CEP receptors (e.g. CEPR1 and CEPR2). In terms of processing, the mature small signaling peptide is generated by proteolytic processing of the longer precursor.

The protein resides in the secreted. Its subcellular location is the extracellular space. The protein localises to the apoplast. Functionally, extracellular signaling peptide that may regulate primary root growth rate and systemic nitrogen (N)-demand signaling. The protein is Precursor of CEP14 of Arabidopsis thaliana (Mouse-ear cress).